The chain runs to 224 residues: Redox-sensing transcriptional repressor Rex (224 aa).

Residues 17-56 (RYHRYLEELLKNDVKRISSRELSEKMGVTASQIRQDLNNF) constitute a DNA-binding region (H-T-H motif). 91-96 (GAGNLG) contacts NAD(+).

It belongs to the transcriptional regulatory Rex family. As to quaternary structure, homodimer.

Its subcellular location is the cytoplasm. Modulates transcription in response to changes in cellular NADH/NAD(+) redox state. This chain is Redox-sensing transcriptional repressor Rex, found in Thermoanaerobacter pseudethanolicus (strain ATCC 33223 / 39E) (Clostridium thermohydrosulfuricum).